Reading from the N-terminus, the 297-residue chain is Ribonuclease HIII (297 aa).

An RNase H type-2 domain is found at 81-297 (IPIIGTDEVG…NTKKAQALLK (217 aa)). The a divalent metal cation site is built by Asp-87, Glu-88, and Asp-192.

Belongs to the RNase HII family. RnhC subfamily. It depends on Mn(2+) as a cofactor. Mg(2+) serves as cofactor.

The protein resides in the cytoplasm. It carries out the reaction Endonucleolytic cleavage to 5'-phosphomonoester.. In terms of biological role, endonuclease that specifically degrades the RNA of RNA-DNA hybrids. In Streptococcus agalactiae serotype Ia (strain ATCC 27591 / A909 / CDC SS700), this protein is Ribonuclease HIII.